The sequence spans 111 residues: Ribonuclease P protein component (111 aa).

This sequence belongs to the RnpA family. In terms of assembly, consists of a catalytic RNA component (M1 or rnpB) and a protein subunit.

It carries out the reaction Endonucleolytic cleavage of RNA, removing 5'-extranucleotides from tRNA precursor.. In terms of biological role, RNaseP catalyzes the removal of the 5'-leader sequence from pre-tRNA to produce the mature 5'-terminus. It can also cleave other RNA substrates such as 4.5S RNA. The protein component plays an auxiliary but essential role in vivo by binding to the 5'-leader sequence and broadening the substrate specificity of the ribozyme. The chain is Ribonuclease P protein component from Borrelia garinii subsp. bavariensis (strain ATCC BAA-2496 / DSM 23469 / PBi) (Borreliella bavariensis).